Here is a 136-residue protein sequence, read N- to C-terminus: Lipoprotein YghG (136 aa).

The signal sequence occupies residues 1-24; that stretch reads MSIKQMPGRVLISLLLSVTGLLSG. C25 carries N-palmitoyl cysteine lipidation. C25 carries S-diacylglycerol cysteine lipidation.

The protein belongs to the GspS/AspS pilotin family.

It localises to the cell outer membrane. Its function is as follows. Involved in a type II secretion system (T2SS, formerly general secretion pathway, GSP) for the export of folded proteins across the outer membrane. In a functional T2SS this subunit helps assemble the outer membrane channel. The sequence is that of Lipoprotein YghG (yghG) from Escherichia coli (strain K12).